The sequence spans 156 residues: Small ribosomal subunit protein uS7 (156 aa).

It belongs to the universal ribosomal protein uS7 family. In terms of assembly, part of the 30S ribosomal subunit. Contacts proteins S9 and S11.

One of the primary rRNA binding proteins, it binds directly to 16S rRNA where it nucleates assembly of the head domain of the 30S subunit. Is located at the subunit interface close to the decoding center, probably blocks exit of the E-site tRNA. This Corynebacterium jeikeium (strain K411) protein is Small ribosomal subunit protein uS7.